We begin with the raw amino-acid sequence, 442 residues long: Divalent metal cation transporter MntH (442 aa).

11 consecutive transmembrane segments (helical) span residues 29-49 (MLAYAGPGYLVSVGYIDPGNW), 62-82 (TLLTVILLSNLMAILLQSLCV), 106-126 (FCLWVLCEIAIAACDLAELLG), 135-155 (FVIPLIWGVCITALDVLVLLF), 166-186 (ALVIMLVATVGICFTAEILFS), 209-229 (MLYIAIGILGATVMPHNLYLH), 258-278 (FALSLALFINSAILIVSAATF), 295-315 (LLSPLLGVSAASAIFGIALLA), 347-367 (LITRLLAIIPALITIILFGEN), 372-392 (LIVLSQVILSLQLPFAVIPLV), and 413-433 (LAWLVAIVIVGLNAWLLLQSL).

This sequence belongs to the NRAMP family.

The protein localises to the cell inner membrane. H(+)-stimulated, divalent metal cation uptake system. This is Divalent metal cation transporter MntH from Nostoc sp. (strain PCC 7120 / SAG 25.82 / UTEX 2576).